Here is a 533-residue protein sequence, read N- to C-terminus: Phosphoenolpyruvate carboxykinase (ATP) (533 aa).

Substrate is bound by residues arginine 59, tyrosine 199, and lysine 205. ATP is bound by residues lysine 205, histidine 224, and 240–248 (GLSGTGKTT). Residues lysine 205 and histidine 224 each contribute to the Mn(2+) site. Aspartate 261 contacts Mn(2+). ATP-binding positions include glutamate 289, arginine 325, 441 to 442 (RI), and threonine 447. Arginine 325 serves as a coordination point for substrate.

This sequence belongs to the phosphoenolpyruvate carboxykinase (ATP) family. In terms of assembly, monomer. It depends on Mn(2+) as a cofactor.

It localises to the cytoplasm. The catalysed reaction is oxaloacetate + ATP = phosphoenolpyruvate + ADP + CO2. It functions in the pathway carbohydrate biosynthesis; gluconeogenesis. In terms of biological role, involved in the gluconeogenesis. Catalyzes the conversion of oxaloacetate (OAA) to phosphoenolpyruvate (PEP) through direct phosphoryl transfer between the nucleoside triphosphate and OAA. In Idiomarina loihiensis (strain ATCC BAA-735 / DSM 15497 / L2-TR), this protein is Phosphoenolpyruvate carboxykinase (ATP).